The primary structure comprises 288 residues: Fe-S cluster assembly protein dre2 (288 aa).

The interval 1 to 127 is N-terminal SAM-like domain; it reads MSSSVLVLTS…LSRPNQVEAV (127 aa). The tract at residues 128-177 is linker; sequence PIKLSNKNGQSASKNKILDFLKSDKENLISGDDDQELIDEDELLDESAHD. [2Fe-2S] cluster contacts are provided by Cys185, Cys196, Cys199, and Cys201. Residues 185–201 are fe-S binding site A; sequence CKPEPGKKKRACKNCTC. Residues Cys244, Cys247, Cys255, and Cys258 each coordinate [4Fe-4S] cluster. 2 short sequence motifs (cx2C motif) span residues 244–247 and 255–258; these read CGNC and CSGC. Positions 244-258 are fe-S binding site B; that stretch reads CGNCYLGDAFRCSGC.

This sequence belongs to the anamorsin family. As to quaternary structure, monomer. Interacts with tah18. Interacts with tim40. It depends on [2Fe-2S] cluster as a cofactor. [4Fe-4S] cluster serves as cofactor.

The protein resides in the cytoplasm. It is found in the mitochondrion intermembrane space. In terms of biological role, component of the cytosolic iron-sulfur (Fe-S) protein assembly (CIA) machinery required for the maturation of extramitochondrial Fe-S proteins. Part of an electron transfer chain functioning in an early step of cytosolic Fe-S biogenesis, facilitating the de novo assembly of a [4Fe-4S] cluster on the scaffold complex cfd1-nbp35. Electrons are transferred to dre2 from NADPH via the FAD- and FMN-containing protein tah18. Tah18-dre2 are also required for the assembly of the diferric tyrosyl radical cofactor of ribonucleotide reductase (RNR), probably by providing electrons for reduction during radical cofactor maturation in the catalytic small subunit suc22. The protein is Fe-S cluster assembly protein dre2 of Schizosaccharomyces pombe (strain 972 / ATCC 24843) (Fission yeast).